We begin with the raw amino-acid sequence, 250 residues long: 5'/3'-nucleotidase SurE (250 aa).

A divalent metal cation is bound by residues Asp-8, Asp-9, Ser-39, and Asn-92.

It belongs to the SurE nucleotidase family. Requires a divalent metal cation as cofactor.

It localises to the cytoplasm. It carries out the reaction a ribonucleoside 5'-phosphate + H2O = a ribonucleoside + phosphate. The enzyme catalyses a ribonucleoside 3'-phosphate + H2O = a ribonucleoside + phosphate. It catalyses the reaction [phosphate](n) + H2O = [phosphate](n-1) + phosphate + H(+). Functionally, nucleotidase with a broad substrate specificity as it can dephosphorylate various ribo- and deoxyribonucleoside 5'-monophosphates and ribonucleoside 3'-monophosphates with highest affinity to 3'-AMP. Also hydrolyzes polyphosphate (exopolyphosphatase activity) with the preference for short-chain-length substrates (P20-25). Might be involved in the regulation of dNTP and NTP pools, and in the turnover of 3'-mononucleotides produced by numerous intracellular RNases (T1, T2, and F) during the degradation of various RNAs. The chain is 5'/3'-nucleotidase SurE from Wigglesworthia glossinidia brevipalpis.